A 247-amino-acid chain; its full sequence is 14-3-3 protein gamma (247 aa).

Position 1 is an N-acetylmethionine (Met-1). Val-2 carries the post-translational modification N-acetylvaline; in 14-3-3 protein gamma, N-terminally processed. The segment at 2–247 is interaction with SPATA18/MIEAP; it reads VDREQLVQKA…QDDDGGEGNN (246 aa). Ser-71 is subject to Phosphoserine. The residue at position 133 (Tyr-133) is a Phosphotyrosine. Thr-145 carries the post-translational modification Phosphothreonine. Phosphoserine is present on Ser-215. Thr-234 bears the Phosphothreonine mark. Ser-235 carries the post-translational modification Phosphoserine.

Belongs to the 14-3-3 family. As to quaternary structure, homodimer. Part of a complex that contains DSG3, PKP1, YAP1 and YWHAG; the complex is required for localization of DSG3 and YAP1 to the cell membrane in keratinocytes. Interacts with SAMSN1. Interacts with RAF1, SSH1 and CRTC2/TORC2. Interacts with ABL1 (phosphorylated form); the interaction retains it in the cytoplasm. Interacts with GAB2. Interacts with MDM4 (phosphorylated); negatively regulates MDM4 activity toward TP53. Interacts with PKA-phosphorylated AANAT and SIRT2. Interacts with the 'Thr-369' phosphorylated form of DAPK2. Interacts with PI4KB, TBC1D22A and TBC1D22B. Interacts with SLITRK1. Interacts with LRRK2; this interaction is dependent on LRRK2 phosphorylation. Interacts with MARK2 and MARK3. Interacts with MEFV. Interacts with ENDOG, TSC2 and PIK3C3; interaction with ENDOG weakens its interaction with TSC2 and PIK3C3. Interacts with (phosphorylated) WDR24. Interacts with BEST1; this interaction promotes L-glutamate channel activity leading to the positive regulation of NMDA glutamate receptor activity through the L-glutamate secretion. Interacts with PKP1 (when phosphorylated); the interaction results in translocation of PKP1 to the cytoplasm and loss of intercellular adhesion in keratinocytes. Interacts with SPATA18/MIEAP; a protein that also plays a role in MALM. In terms of processing, phosphorylated by various PKC isozymes.

It localises to the cytoplasm. The protein resides in the cytosol. Its subcellular location is the mitochondrion matrix. Its function is as follows. Adapter protein implicated in the regulation of a large spectrum of both general and specialized signaling pathways. Binds to a large number of partners, usually by recognition of a phosphoserine or phosphothreonine motif. Binding generally results in the modulation of the activity of the binding partner. Promotes inactivation of WDR24 component of the GATOR2 complex by binding to phosphorylated WDR24. Participates in the positive regulation of NMDA glutamate receptor activity by promoting the L-glutamate secretion through interaction with BEST1. Reduces keratinocyte intercellular adhesion, via interacting with PKP1 and sequestering it in the cytoplasm, thereby reducing its incorporation into desmosomes. Plays a role in mitochondrial protein catabolic process (also named MALM) that promotes the degradation of damaged proteins inside mitochondria. In Bos taurus (Bovine), this protein is 14-3-3 protein gamma.